We begin with the raw amino-acid sequence, 427 residues long: Glutamyl-tRNA reductase (427 aa).

Residues 49-52, Ser-101, 106-108, and Gln-112 contribute to the substrate site; these read TCNR and EPQ. The active-site Nucleophile is the Cys-50. 181–186 provides a ligand contact to NADP(+); that stretch reads GAGETI. The disordered stretch occupies residues 407–427; the sequence is FPATPGYRHPPVRPDDADPAP. Residues 418–427 are compositionally biased toward basic and acidic residues; the sequence is VRPDDADPAP.

Belongs to the glutamyl-tRNA reductase family. In terms of assembly, homodimer.

The catalysed reaction is (S)-4-amino-5-oxopentanoate + tRNA(Glu) + NADP(+) = L-glutamyl-tRNA(Glu) + NADPH + H(+). It participates in porphyrin-containing compound metabolism; protoporphyrin-IX biosynthesis; 5-aminolevulinate from L-glutamyl-tRNA(Glu): step 1/2. In terms of biological role, catalyzes the NADPH-dependent reduction of glutamyl-tRNA(Glu) to glutamate 1-semialdehyde (GSA). In Stenotrophomonas maltophilia (strain K279a), this protein is Glutamyl-tRNA reductase.